We begin with the raw amino-acid sequence, 510 residues long: NADP-dependent fatty aldehyde dehydrogenase (510 aa).

229-234 (GSVGGG) is a binding site for NADP(+). Active-site residues include glutamate 253 and cysteine 289.

The protein belongs to the aldehyde dehydrogenase family. As to quaternary structure, homodimer.

It catalyses the reaction an aldehyde + NADP(+) + H2O = a carboxylate + NADPH + 2 H(+). Functionally, catalyzes the oxidation of long-chain aliphatic aldehydes to acids. May be implicated in controlling luminescence as it catalyzes the oxidation of the fatty aldehyde substrate for the light-emitting reaction. The polypeptide is NADP-dependent fatty aldehyde dehydrogenase (aldH) (Vibrio harveyi (Beneckea harveyi)).